A 352-amino-acid chain; its full sequence is MQTYGNPDTTYGWWAGNSGVANRSGKFIAAHVAHAGLIVFWAGAFTLFELSRFDPSVPMGQQPLIALPHLATLGIGFDADGVLMGDTKPVLAIAIVHLVSSMVLAAGGLLHSLLLPGNLEESEVAKARKFNIEWDNPDKLTFILGHHLIILGFAVILLVEWARVHGVYDPAIGAVRQVEYDLNLAEIWNHQTDFLLIDDLEDVMGGHAFLAFVLITGGAWHIATKQVGEYTKFKGKGLLSAEAVLSWSLAGIGWMAIIAAFWSASNTTVYPVEFFGEPLELKFSISPYWIDTVDLPDGVYTSRAWLANVHYYFGFFFIQGHLWHALRALGFDFKRVTNAISNIDSATVTLKD.

6 helical membrane passes run 27-47 (FIAA…AFTL), 90-110 (VLAI…GGLL), 142-162 (FILG…VEWA), 203-223 (VMGG…WHIA), 243-263 (AVLS…AFWS), and 306-326 (LANV…WHAL).

The protein belongs to the PsbB/PsbC family. IsiA/Pcb subfamily. In terms of assembly, the antenna complex consists of divinyl chlorophylls (a and b) and divinyl chlorophyll a/b binding proteins and binds less divinyl chlorophyll b than does low-light-adapted Prochlorococcus. Also forms complexes with PSII, consisting of a PSII dimer and 4 or 8 PcbA subunits. These complexes are also found under conditions of iron-starvation. The cofactor is divinyl chlorophyll a. It depends on divinyl chlorophyll b as a cofactor.

It localises to the cellular thylakoid membrane. The antenna complex functions as a light receptor, it captures and delivers excitation energy to photosystem II and possibly to photosystem I. The Prochlorales pcb genes are not related to higher plant LHCs. The polypeptide is Divinyl chlorophyll a/b light-harvesting protein PcbA (pcbA) (Prochlorococcus marinus subsp. pastoris (strain CCMP1986 / NIES-2087 / MED4)).